We begin with the raw amino-acid sequence, 174 residues long: UPF0664 stress-induced protein C29B12.11c (174 aa).

The segment at 147-174 (HLDPLPPYHRPSSSQDQPPHYEEAVNKS) is disordered. Residues 165–174 (PHYEEAVNKS) are compositionally biased toward basic and acidic residues.

The protein belongs to the UPF0664 family.

It is found in the cytoplasm. Its subcellular location is the nucleus. The polypeptide is UPF0664 stress-induced protein C29B12.11c (Schizosaccharomyces pombe (strain 972 / ATCC 24843) (Fission yeast)).